A 501-amino-acid chain; its full sequence is Aspartyl/glutamyl-tRNA(Asn/Gln) amidotransferase subunit B (501 aa).

The segment at 272-291 (QETRHYQETDGTTSKGRPKE) is disordered.

It belongs to the GatB/GatE family. GatB subfamily. Heterotrimer of A, B and C subunits.

The enzyme catalyses L-glutamyl-tRNA(Gln) + L-glutamine + ATP + H2O = L-glutaminyl-tRNA(Gln) + L-glutamate + ADP + phosphate + H(+). It carries out the reaction L-aspartyl-tRNA(Asn) + L-glutamine + ATP + H2O = L-asparaginyl-tRNA(Asn) + L-glutamate + ADP + phosphate + 2 H(+). Functionally, allows the formation of correctly charged Asn-tRNA(Asn) or Gln-tRNA(Gln) through the transamidation of misacylated Asp-tRNA(Asn) or Glu-tRNA(Gln) in organisms which lack either or both of asparaginyl-tRNA or glutaminyl-tRNA synthetases. The reaction takes place in the presence of glutamine and ATP through an activated phospho-Asp-tRNA(Asn) or phospho-Glu-tRNA(Gln). The sequence is that of Aspartyl/glutamyl-tRNA(Asn/Gln) amidotransferase subunit B from Corynebacterium efficiens (strain DSM 44549 / YS-314 / AJ 12310 / JCM 11189 / NBRC 100395).